Reading from the N-terminus, the 250-residue chain is MAKNYPVVSAEYQEAVEKARQKLRALIAEKSCAPLMLRLAWHSAGTFDVSSKTGGPFGTMKTPAELSHAANAGLDIAVRMLEPIKEEIPTISYADFYQLAGVVAVEVSGGPAVPFHPGREDKPAPPPEGRLPDATKGSDHLRQVFGAQMGLSDQDIVALSGGHTLGRCHKERSGFEGPWTRNPLQFDNSYFTELLSGDKEGLLQLPSDKALLSDPAFCPLVEKYAADEKAFFEDYKEAHLKLSELGFADA.

His-42 (proton acceptor) is an active-site residue. The tract at residues 113 to 137 (VPFHPGREDKPAPPPEGRLPDATKG) is disordered. A heme b-binding site is contributed by His-163. K(+)-binding residues include Thr-164, Thr-180, Asn-182, and Asp-187.

It belongs to the peroxidase family. Ascorbate peroxidase subfamily. Requires heme b as cofactor.

It is found in the cytoplasm. It catalyses the reaction L-ascorbate + H2O2 = L-dehydroascorbate + 2 H2O. In terms of biological role, plays a key role in hydrogen peroxide removal. The protein is L-ascorbate peroxidase 1, cytosolic (APX1) of Oryza sativa subsp. indica (Rice).